The sequence spans 874 residues: Coatomer subunit gamma-1 (874 aa).

Positions M1–E11 are enriched in basic and acidic residues. The tract at residues M1 to H21 is disordered. HEAT repeat units lie at residues T64–D101, K283–S320, V322–S355, and S356–R392. At T594 the chain carries Phosphothreonine. Positions R609 to G874 are interaction with ZNF289/ARFGAP2.

The protein belongs to the COPG family. In terms of assembly, oligomeric complex that consists of at least the alpha, beta, beta', gamma, delta, epsilon and zeta subunits. Interacts with ZNF289/ARFGAP2 through its C-terminal appendage domain. Interacts with EGFR upon EGF treatment; interaction is essential for regulation of EGF-dependent nuclear transport of EGFR by retrograde trafficking from the Golgi to the ER. The coatomer interacts with KDEL receptors; the interaction is important for retrograde trafficking of KDEL-bearing proteins from the Golgi to the endoplasmic reticulum. Interacts with COPB1. Interacts with TMED10 (via C-terminus). Interacts with TMED2, TMED3, TMED7 and TMED9.

The protein resides in the cytoplasm. It localises to the cytosol. The protein localises to the golgi apparatus membrane. It is found in the cytoplasmic vesicle. Its subcellular location is the COPI-coated vesicle membrane. The coatomer is a cytosolic protein complex that binds to dilysine motifs and reversibly associates with Golgi non-clathrin-coated vesicles, which further mediate biosynthetic protein transport from the ER, via the Golgi up to the trans Golgi network. Coatomer complex is required for budding from Golgi membranes, and is essential for the retrograde Golgi-to-ER transport of dilysine-tagged proteins. In mammals, the coatomer can only be recruited by membranes associated to ADP-ribosylation factors (ARFs), which are small GTP-binding proteins; the complex also influences the Golgi structural integrity, as well as the processing, activity, and endocytic recycling of LDL receptors. Required for limiting lipid storage in lipid droplets. Involved in lipid homeostasis by regulating the presence of perilipin family members PLIN2 and PLIN3 at the lipid droplet surface and promoting the association of adipocyte triglyceride lipase (PNPLA2) with the lipid droplet surface to mediate lipolysis. This Mus musculus (Mouse) protein is Coatomer subunit gamma-1 (Copg1).